A 489-amino-acid chain; its full sequence is Betaine aldehyde dehydrogenase (489 aa).

2 residues coordinate K(+): threonine 26 and aspartate 93. 150–152 (GAW) contributes to the NAD(+) binding site. The active-site Charge relay system is the lysine 162. 176–179 (KPSE) lines the NAD(+) pocket. Valine 180 is a binding site for K(+). 229–232 (GVET) is an NAD(+) binding site. Leucine 245 is a binding site for K(+). Glutamate 251 serves as the catalytic Proton acceptor. Residues glycine 253, cysteine 285, and glutamate 386 each coordinate NAD(+). Cysteine 285 acts as the Nucleophile in catalysis. Cysteine sulfenic acid (-SOH) is present on cysteine 285. Residues lysine 456 and glycine 459 each contribute to the K(+) site. Glutamate 463 (charge relay system) is an active-site residue.

This sequence belongs to the aldehyde dehydrogenase family. Dimer of dimers. K(+) is required as a cofactor.

The catalysed reaction is betaine aldehyde + NAD(+) + H2O = glycine betaine + NADH + 2 H(+). It participates in amine and polyamine biosynthesis; betaine biosynthesis via choline pathway; betaine from betaine aldehyde: step 1/1. Its function is as follows. Involved in the biosynthesis of the osmoprotectant glycine betaine. Catalyzes the irreversible oxidation of betaine aldehyde to the corresponding acid. The protein is Betaine aldehyde dehydrogenase of Burkholderia orbicola (strain MC0-3).